Consider the following 272-residue polypeptide: Phosphate import ATP-binding protein PstB 2 (272 aa).

The region spanning 26-267 (IEINNLCLNY…PIHKQTEDYI (242 aa)) is the ABC transporter domain. Residue 58-65 (GPSGCGKS) participates in ATP binding.

This sequence belongs to the ABC transporter superfamily. Phosphate importer (TC 3.A.1.7) family. The complex is composed of two ATP-binding proteins (PstB), two transmembrane proteins (PstC and PstA) and a solute-binding protein (PstS).

Its subcellular location is the cell inner membrane. It carries out the reaction phosphate(out) + ATP + H2O = ADP + 2 phosphate(in) + H(+). Functionally, part of the ABC transporter complex PstSACB involved in phosphate import. Responsible for energy coupling to the transport system. The chain is Phosphate import ATP-binding protein PstB 2 from Aliivibrio fischeri (strain ATCC 700601 / ES114) (Vibrio fischeri).